The following is a 481-amino-acid chain: MRRSDRLRCAGASLLVVLCGVFRSSFGGRTLPALSDDIPFRLKWPGPDFTLPTAGIPYKEDNYIIMTTADKEKYKCLLPLMANGNEEQDGEYKGPSPGALLEPLFKLSSCSYRIESYWTYEVCHGKYIRQYHEEKETGQKLSIQEYYLGKMMKKSTTEAGENQEEKESAESPKEIYTKNIEGQMTPYYPVEMINGTPCSLKQNQPRSSTVMYICHPESKHEILSVAEVTTCEYEVVILTPLLCNHPKYRFRTSPINDIFCQSMPGSPLRPQSLVKLEHQKEEIKSPLKPNKEEEQQLLREKFSTIHKPVTVGSQQQVTVGTTHISRLTDEQLIKEFLSGSYCFHGGVGWWKYEFCYGKYVHQYHEDKDTGKTTVVVGTWKADEHQEWAKKNLARAYMTTPDGVQTVKTVSHFYGGGDVCEVSEQPRQVIVKLKCKESESPHAVTVYMLEPQTCQYILGVESPVICKILDTADENGLLSIPN.

The first 27 residues, 1-27 (MRRSDRLRCAGASLLVVLCGVFRSSFG), serve as a signal peptide directing secretion. MRH domains are found at residues 108–245 (SSCS…LCNH) and 340–467 (SYCF…ICKI). Disulfide bonds link cysteine 110-cysteine 123, cysteine 198-cysteine 231, cysteine 214-cysteine 243, cysteine 342-cysteine 355, cysteine 419-cysteine 453, and cysteine 434-cysteine 465.

The protein localises to the endoplasmic reticulum lumen. Its function is as follows. Probable lectin that binds selectively to improperly folded lumenal proteins. May function in endoplasmic reticulum quality control and endoplasmic reticulum-associated degradation (ERAD) of both non-glycosylated proteins and glycoproteins. This is Endoplasmic reticulum lectin 1 (erlec1) from Xenopus tropicalis (Western clawed frog).